The primary structure comprises 274 residues: 2,3,4,5-tetrahydropyridine-2,6-dicarboxylate N-succinyltransferase (274 aa).

Positions 104 and 141 each coordinate substrate.

Belongs to the transferase hexapeptide repeat family. As to quaternary structure, homotrimer.

The protein localises to the cytoplasm. The catalysed reaction is (S)-2,3,4,5-tetrahydrodipicolinate + succinyl-CoA + H2O = (S)-2-succinylamino-6-oxoheptanedioate + CoA. It functions in the pathway amino-acid biosynthesis; L-lysine biosynthesis via DAP pathway; LL-2,6-diaminopimelate from (S)-tetrahydrodipicolinate (succinylase route): step 1/3. Its activity is regulated as follows. Inhibited by p-(chloromercuri)benzenesulfonic acid and cobalt. The polypeptide is 2,3,4,5-tetrahydropyridine-2,6-dicarboxylate N-succinyltransferase (dapD) (Unknown prokaryotic organism).